Reading from the N-terminus, the 303-residue chain is ATP synthase gamma chain (303 aa).

This sequence belongs to the ATPase gamma chain family. F-type ATPases have 2 components, CF(1) - the catalytic core - and CF(0) - the membrane proton channel. CF(1) has five subunits: alpha(3), beta(3), gamma(1), delta(1), epsilon(1). CF(0) has three main subunits: a, b and c.

It localises to the cell inner membrane. Its function is as follows. Produces ATP from ADP in the presence of a proton gradient across the membrane. The gamma chain is believed to be important in regulating ATPase activity and the flow of protons through the CF(0) complex. The polypeptide is ATP synthase gamma chain (Bartonella quintana (strain Toulouse) (Rochalimaea quintana)).